We begin with the raw amino-acid sequence, 117 residues long: Multidrug resistance protein EbrB (117 aa).

4 helical membrane passes run 3-23, 31-51, 59-79, and 81-101; these read GLLYLALAIVSEVFGSTMLKL, WPIAGVIVGFLSAFTFLSFSL, AYATWSGVGTALTAIVGFLLF, and ETISLKGVFGLTLVIAGVVVL.

The protein belongs to the drug/metabolite transporter (DMT) superfamily. Small multidrug resistance (SMR) (TC 2.A.7.1) family. EbrA/EbrB subfamily. The efflux pump is composed of EbrA and EbrB.

It localises to the cell membrane. In terms of biological role, part of a multidrug efflux pump. Confers resistance to cationic lipophilic dyes such as ethidium bromide, acriflavine, pyronine Y and safranin O. The efflux is probably coupled to an influx of protons. This chain is Multidrug resistance protein EbrB (ebrB), found in Bacillus subtilis (strain 168).